Reading from the N-terminus, the 273-residue chain is NLP effector protein 10 (273 aa).

A signal peptide spans 1–21; it reads MKLPTFLIGFVALLVTSNGSA. N91 carries N-linked (GlcNAc...) asparagine glycosylation. The Conserved undecapeptide motif signature appears at 129-139; sequence AIMYAWYLPRA. Positions 149 to 155 match the Conserved heptapeptide motif motif; sequence GHRHYWL.

Belongs to the Necrosis inducing protein (NPP1) family.

Its subcellular location is the secreted. Functionally, secreted effector that acts as a pathogen-associated molecular pattern (PAMP) recognized by the plant immune system. Seems not to induce necrosis in Nicotiana benthamiana leaves but significantly improves disease resistance of Arabidopsis thaliana to Hyaloperonospora arabidopsidis and causes an inhibition of plant growth which is typically associated with enhanced immunity when over-expressed in Arabidopsis. The sequence is that of NLP effector protein 10 from Plasmopara viticola (Downy mildew of grapevine).